We begin with the raw amino-acid sequence, 672 residues long: Bifunctional polymyxin resistance protein ArnA (672 aa).

Residues 1 to 310 form a formyltransferase ArnAFT region; sequence MKAIVFAYHD…EMGMVPQAKL (310 aa). His-104 serves as the catalytic Proton donor; for formyltransferase activity. Residues Arg-114 and 136–140 contribute to the (6R)-10-formyltetrahydrofolate site; that span reads VSRAD. Residues 320–672 form a dehydrogenase ArnADH region; sequence RRTRVLILGV…HADNVTDTQG (353 aa). NAD(+) is bound by residues Asp-353 and 374-375; that span reads DI. Residues Ala-399, Tyr-404, and 438 to 439 contribute to the UDP-alpha-D-glucuronate site; that span reads TS. Catalysis depends on Glu-440, which acts as the Proton acceptor; for decarboxylase activity. UDP-alpha-D-glucuronate is bound by residues Arg-466, Asn-498, 532-541, and Tyr-619; that span reads KLVDGGAQKR. The Proton donor; for decarboxylase activity role is filled by Arg-625.

The protein in the N-terminal section; belongs to the Fmt family. UDP-L-Ara4N formyltransferase subfamily. In the C-terminal section; belongs to the NAD(P)-dependent epimerase/dehydratase family. UDP-glucuronic acid decarboxylase subfamily. In terms of assembly, homohexamer, formed by a dimer of trimers.

It carries out the reaction UDP-alpha-D-glucuronate + NAD(+) = UDP-beta-L-threo-pentopyranos-4-ulose + CO2 + NADH. The enzyme catalyses UDP-4-amino-4-deoxy-beta-L-arabinose + (6R)-10-formyltetrahydrofolate = UDP-4-deoxy-4-formamido-beta-L-arabinose + (6S)-5,6,7,8-tetrahydrofolate + H(+). It functions in the pathway nucleotide-sugar biosynthesis; UDP-4-deoxy-4-formamido-beta-L-arabinose biosynthesis; UDP-4-deoxy-4-formamido-beta-L-arabinose from UDP-alpha-D-glucuronate: step 1/3. It participates in nucleotide-sugar biosynthesis; UDP-4-deoxy-4-formamido-beta-L-arabinose biosynthesis; UDP-4-deoxy-4-formamido-beta-L-arabinose from UDP-alpha-D-glucuronate: step 3/3. Its pathway is bacterial outer membrane biogenesis; lipopolysaccharide biosynthesis. In terms of biological role, bifunctional enzyme that catalyzes the oxidative decarboxylation of UDP-glucuronic acid (UDP-GlcUA) to UDP-4-keto-arabinose (UDP-Ara4O) and the addition of a formyl group to UDP-4-amino-4-deoxy-L-arabinose (UDP-L-Ara4N) to form UDP-L-4-formamido-arabinose (UDP-L-Ara4FN). The modified arabinose is attached to lipid A and is required for resistance to polymyxin and cationic antimicrobial peptides. This Pectobacterium carotovorum subsp. carotovorum (strain PC1) protein is Bifunctional polymyxin resistance protein ArnA.